The sequence spans 576 residues: Sulfite reductase [NADPH] hemoprotein beta-component (576 aa).

[4Fe-4S] cluster is bound by residues Cys-435, Cys-441, Cys-480, and Cys-484. Cys-484 contributes to the siroheme binding site.

Belongs to the nitrite and sulfite reductase 4Fe-4S domain family. As to quaternary structure, alpha(8)-beta(8). The alpha component is a flavoprotein, the beta component is a hemoprotein. Siroheme is required as a cofactor. The cofactor is [4Fe-4S] cluster.

It carries out the reaction hydrogen sulfide + 3 NADP(+) + 3 H2O = sulfite + 3 NADPH + 4 H(+). Its pathway is sulfur metabolism; hydrogen sulfide biosynthesis; hydrogen sulfide from sulfite (NADPH route): step 1/1. Functionally, component of the sulfite reductase complex that catalyzes the 6-electron reduction of sulfite to sulfide. This is one of several activities required for the biosynthesis of L-cysteine from sulfate. The chain is Sulfite reductase [NADPH] hemoprotein beta-component from Yersinia pseudotuberculosis serotype O:1b (strain IP 31758).